Reading from the N-terminus, the 442-residue chain is Cysteine proteinase 4 (442 aa).

Residues M1 to A17 form the signal peptide. The propeptide at K18–P111 is activation peptide. Disulfide bonds link C132/C178 and C169/C212. C135 is an active-site residue. Residues N228 and N254 are each glycosylated (N-linked (GlcNAc...) asparagine). A disulfide bridge links C270 with C428. H277 is an active-site residue. The segment at S286–A396 is disordered. Over residues G287–G376 the composition is skewed to low complexity. Gly residues predominate over residues S377–S391. Residue N406 is part of the active site.

It belongs to the peptidase C1 family. Post-translationally, glycosylated; contains GlcNAc-alpha-1-P-Ser residues and fucose.

It localises to the lysosome. This Dictyostelium discoideum (Social amoeba) protein is Cysteine proteinase 4 (cprD).